The sequence spans 325 residues: Elongation factor P--(R)-beta-lysine ligase (325 aa).

76 to 78 (SPE) provides a ligand contact to substrate. ATP contacts are provided by residues 100-102 (RNE) and N109. Y118 contributes to the substrate binding site. 244 to 245 (EL) contacts ATP. E251 is a binding site for substrate. G300 contributes to the ATP binding site.

Belongs to the class-II aminoacyl-tRNA synthetase family. EpmA subfamily. In terms of assembly, homodimer.

It catalyses the reaction D-beta-lysine + L-lysyl-[protein] + ATP = N(6)-((3R)-3,6-diaminohexanoyl)-L-lysyl-[protein] + AMP + diphosphate + H(+). Functionally, with EpmB is involved in the beta-lysylation step of the post-translational modification of translation elongation factor P (EF-P). Catalyzes the ATP-dependent activation of (R)-beta-lysine produced by EpmB, forming a lysyl-adenylate, from which the beta-lysyl moiety is then transferred to the epsilon-amino group of a conserved specific lysine residue in EF-P. This is Elongation factor P--(R)-beta-lysine ligase from Photorhabdus laumondii subsp. laumondii (strain DSM 15139 / CIP 105565 / TT01) (Photorhabdus luminescens subsp. laumondii).